The chain runs to 715 residues: Coiled-coil domain-containing protein 13 (715 aa).

Coiled coils occupy residues 16–105 (KAMQ…KERD) and 134–458 (ATKI…NVHY). The disordered stretch occupies residues 20-65 (EMQHKRLQKQMEKKREKELSLKSRADDQEEPLEVSDGLSLLHAGEP). Positions 28-45 (KQMEKKREKELSLKSRAD) are enriched in basic and acidic residues. 3 positions are modified to phosphoserine: Ser-258, Ser-469, and Ser-536. Disordered regions lie at residues 482–541 (EDPG…EQKG) and 607–645 (LEPG…DPSF). The stretch at 554-608 (QAAEVERDRLTEFVTVLQKRVEESNSKLLESERKLQEERHRTVVLEQHLEKIRLE) forms a coiled coil. The span at 625-637 (GLPTSNNRHNPTG) shows a compositional bias: polar residues. Residues 653-683 (VESQMEELTTRLAIQVEENEMLKAALGSALR) are a coiled coil.

In terms of assembly, interacts with PCM1, CEP290 and PCNT.

It is found in the cytoplasm. Its subcellular location is the cytoskeleton. It localises to the microtubule organizing center. The protein resides in the centrosome. The protein localises to the centriolar satellite. It is found in the cilium basal body. In terms of biological role, required for primary cilia formation and promotes the localization of the ciliopathy protein BBS4 to both centriolar satellites and cilia. This chain is Coiled-coil domain-containing protein 13, found in Homo sapiens (Human).